The chain runs to 311 residues: Ribosomal RNA large subunit methyltransferase F (311 aa).

It belongs to the methyltransferase superfamily. METTL16/RlmF family.

It localises to the cytoplasm. The catalysed reaction is adenosine(1618) in 23S rRNA + S-adenosyl-L-methionine = N(6)-methyladenosine(1618) in 23S rRNA + S-adenosyl-L-homocysteine + H(+). Its function is as follows. Specifically methylates the adenine in position 1618 of 23S rRNA. The polypeptide is Ribosomal RNA large subunit methyltransferase F (Pectobacterium carotovorum subsp. carotovorum (strain PC1)).